A 1014-amino-acid polypeptide reads, in one-letter code: Regulator of telomere elongation helicase 1 homolog (1014 aa).

The region spanning 7 to 308 (RGVDVDFPYD…NSADKQFDPE (302 aa)) is the Helicase ATP-binding domain. 42 to 49 (SPTGTGKT) provides a ligand contact to ATP. The segment covering 70-85 (GGGGGGGGGGGGGGGS) has biased composition (gly residues). Positions 70–106 (GGGGGGGGGGGGGGGSQQPPYGSQPSGSQHSGGSASQ) are disordered. A compositionally biased stretch (low complexity) spans 86–106 (QQPPYGSQPSGSQHSGGSASQ). The [4Fe-4S] cluster site is built by C149, C170, C175, and C211. Residues 255–258 (DEAH) carry the DEAH box motif. The tract at residues 906–930 (SSKKSNITHAPGNSGAIHEKSGGQE) is disordered.

Belongs to the helicase family. RAD3/XPD subfamily.

It is found in the nucleus. It catalyses the reaction ATP + H2O = ADP + phosphate + H(+). A probable ATP-dependent DNA helicase implicated in DNA replication, DNA repair and the maintenance of genomic stability. Acts as an anti-recombinase to counteract toxic recombination and limit crossover during meiosis. Regulates meiotic recombination and crossover homeostasis by physically dissociating strand invasion events and thereby promotes noncrossover repair by meiotic synthesis dependent strand annealing (SDSA) as well as disassembly of D loop recombination intermediates. The protein is Regulator of telomere elongation helicase 1 homolog of Oryza sativa subsp. japonica (Rice).